Here is a 199-residue protein sequence, read N- to C-terminus: N-(5'-phosphoribosyl)anthranilate isomerase (199 aa).

Belongs to the TrpF family.

It catalyses the reaction N-(5-phospho-beta-D-ribosyl)anthranilate = 1-(2-carboxyphenylamino)-1-deoxy-D-ribulose 5-phosphate. It participates in amino-acid biosynthesis; L-tryptophan biosynthesis; L-tryptophan from chorismate: step 3/5. This Clostridium kluyveri (strain NBRC 12016) protein is N-(5'-phosphoribosyl)anthranilate isomerase.